The chain runs to 312 residues: Ribosomal RNA small subunit methyltransferase H (312 aa).

Residues 33–35, D52, F81, D102, and Q109 each bind S-adenosyl-L-methionine; that span reads GGH.

Belongs to the methyltransferase superfamily. RsmH family.

The protein resides in the cytoplasm. It catalyses the reaction cytidine(1402) in 16S rRNA + S-adenosyl-L-methionine = N(4)-methylcytidine(1402) in 16S rRNA + S-adenosyl-L-homocysteine + H(+). Its function is as follows. Specifically methylates the N4 position of cytidine in position 1402 (C1402) of 16S rRNA. This is Ribosomal RNA small subunit methyltransferase H from Leuconostoc mesenteroides subsp. mesenteroides (strain ATCC 8293 / DSM 20343 / BCRC 11652 / CCM 1803 / JCM 6124 / NCDO 523 / NBRC 100496 / NCIMB 8023 / NCTC 12954 / NRRL B-1118 / 37Y).